We begin with the raw amino-acid sequence, 215 residues long: Large ribosomal subunit protein uL4 (215 aa).

A disordered region spans residues 46–72; the sequence is TAKSKNRAEVSGGGRKPWAQKGGGRAR. Residues 56–71 are compositionally biased toward gly residues; it reads SGGGRKPWAQKGGGRA.

The protein belongs to the universal ribosomal protein uL4 family. As to quaternary structure, part of the 50S ribosomal subunit.

Its function is as follows. One of the primary rRNA binding proteins, this protein initially binds near the 5'-end of the 23S rRNA. It is important during the early stages of 50S assembly. It makes multiple contacts with different domains of the 23S rRNA in the assembled 50S subunit and ribosome. In terms of biological role, forms part of the polypeptide exit tunnel. The chain is Large ribosomal subunit protein uL4 from Helicobacter pylori (strain ATCC 700392 / 26695) (Campylobacter pylori).